We begin with the raw amino-acid sequence, 329 residues long: Bifunctional nuclease 2 (329 aa).

A BFN domain is found at 121–256 (CVHNNPQGGN…YLAYSDGMRV (136 aa)). The UVR domain occupies 287 to 322 (DTKEFDLVRNMMQAVDEERYDEAAEWRDKLGKFQAK).

The protein belongs to the bifunctional nuclease family.

It is found in the nucleus. In terms of biological role, bifunctional nuclease with both RNase and DNase activities. Involved in basal defense response. Participates in abscisic acid-derived callose deposition following infection by a necrotrophic pathogen. This Arabidopsis thaliana (Mouse-ear cress) protein is Bifunctional nuclease 2 (BBD2).